The primary structure comprises 211 residues: Large ribosomal subunit protein uL4 (211 aa).

The tract at residues 50-77 is disordered; sequence STLTKGEVSGGGKKPYKQKHTGKARQGS. Residues 63–72 are compositionally biased toward basic residues; sequence KPYKQKHTGK.

It belongs to the universal ribosomal protein uL4 family. In terms of assembly, part of the 50S ribosomal subunit.

Its function is as follows. One of the primary rRNA binding proteins, this protein initially binds near the 5'-end of the 23S rRNA. It is important during the early stages of 50S assembly. It makes multiple contacts with different domains of the 23S rRNA in the assembled 50S subunit and ribosome. Forms part of the polypeptide exit tunnel. This chain is Large ribosomal subunit protein uL4, found in Mycoplasma genitalium (strain ATCC 33530 / DSM 19775 / NCTC 10195 / G37) (Mycoplasmoides genitalium).